The sequence spans 155 residues: Small ribosomal subunit protein uS7cz/uS7cy (155 aa).

This sequence belongs to the universal ribosomal protein uS7 family. In terms of assembly, part of the 30S ribosomal subunit.

Its subcellular location is the plastid. In terms of biological role, one of the primary rRNA binding proteins, it binds directly to 16S rRNA where it nucleates assembly of the head domain of the 30S subunit. The chain is Small ribosomal subunit protein uS7cz/uS7cy (rps7-A) from Cuscuta exaltata (Tall dodder).